Here is a 432-residue protein sequence, read N- to C-terminus: Glutamyl-tRNA reductase (432 aa).

Residues 55 to 58 (TCNR), Ser-114, 119 to 121 (ETQ), and Gln-125 contribute to the substrate site. Residue Cys-56 is the Nucleophile of the active site. Residue 194–199 (GAGEMI) coordinates NADP(+).

This sequence belongs to the glutamyl-tRNA reductase family. Homodimer.

It catalyses the reaction (S)-4-amino-5-oxopentanoate + tRNA(Glu) + NADP(+) = L-glutamyl-tRNA(Glu) + NADPH + H(+). It functions in the pathway porphyrin-containing compound metabolism; protoporphyrin-IX biosynthesis; 5-aminolevulinate from L-glutamyl-tRNA(Glu): step 1/2. Catalyzes the NADPH-dependent reduction of glutamyl-tRNA(Glu) to glutamate 1-semialdehyde (GSA). In Burkholderia lata (strain ATCC 17760 / DSM 23089 / LMG 22485 / NCIMB 9086 / R18194 / 383), this protein is Glutamyl-tRNA reductase.